The chain runs to 892 residues: Alanine--tRNA ligase (892 aa).

Residues His594, His598, Cys702, and His706 each contribute to the Zn(2+) site.

It belongs to the class-II aminoacyl-tRNA synthetase family. Zn(2+) serves as cofactor.

The protein resides in the cytoplasm. It catalyses the reaction tRNA(Ala) + L-alanine + ATP = L-alanyl-tRNA(Ala) + AMP + diphosphate. Catalyzes the attachment of alanine to tRNA(Ala) in a two-step reaction: alanine is first activated by ATP to form Ala-AMP and then transferred to the acceptor end of tRNA(Ala). Also edits incorrectly charged Ser-tRNA(Ala) and Gly-tRNA(Ala) via its editing domain. The protein is Alanine--tRNA ligase of Pyrobaculum neutrophilum (strain DSM 2338 / JCM 9278 / NBRC 100436 / V24Sta) (Thermoproteus neutrophilus).